We begin with the raw amino-acid sequence, 64 residues long: Tracheal antimicrobial peptide (64 aa).

An N-terminal signal peptide occupies residues 1–26 (MRLHHLLLALLFLVLSAWSGFTQGVG). Intrachain disulfides connect Cys-31–Cys-60, Cys-38–Cys-53, and Cys-43–Cys-61.

Belongs to the beta-defensin family. LAP/TAP subfamily. Tracheal epithelium.

It is found in the secreted. Functionally, has antibacterial activity in vitro against Escherichia coli, Staphylococcus aureus, Klebsiella pneumonia, and Pseudomonas aeruginosa. In addition, the peptide is active against Candida albicans, indicating a broad spectrum of activity. The polypeptide is Tracheal antimicrobial peptide (Bos taurus (Bovine)).